We begin with the raw amino-acid sequence, 310 residues long: Carbamate kinase 1 (310 aa).

In terms of assembly, homodimer (predominantly) and homotetramer.

It localises to the cytoplasm. It carries out the reaction hydrogencarbonate + NH4(+) + ATP = carbamoyl phosphate + ADP + H2O + H(+). The protein operates within metabolic intermediate metabolism; carbamoyl phosphate degradation; CO(2) and NH(3) from carbamoyl phosphate: step 1/1. With respect to regulation, inhibited by adenosine(5')pentaphospho(5')adenosine (Ap5A), Ap6A and to a much lower extent by Ap4A. Functionally, catalyzes the reversible synthesis of carbamate and ATP from carbamoyl phosphate and ADP. Can also catalyze, although with low efficiency, the phosphorylation of bicarbonate, leading to the formation of carboxyphosphate, an unstable intermediate found in the reactions catalyzed by carbamoyl-phosphate synthase and biotin carboxylase. Can also use acetate. This Enterococcus faecium (Streptococcus faecium) protein is Carbamate kinase 1 (arcC1).